The following is a 91-amino-acid chain: Non-hemolytic enterotoxin 105 kDa component (91 aa).

Zn(2+) serves as cofactor.

The protein resides in the secreted. This protein is a metalloprotease with gelatinolytic and collagenolytic activity and is a component of the non-hemolytic enterotoxin complex (NHE). The sequence is that of Non-hemolytic enterotoxin 105 kDa component from Bacillus cereus.